Here is a 494-residue protein sequence, read N- to C-terminus: Poly(3-hydroxybutyrate) depolymerase (494 aa).

Positions 1–25 (MAFNFIRAAAAGAAMALCGVGSVHA) are cleaved as a signal peptide. The Nucleophile role is filled by S45. Catalysis depends on charge relay system residues D132 and H166. One can recognise a Fibronectin type-III domain in the interval 347–431 (APTGVSTSGA…AAASGTTLAA (85 aa)).

Belongs to the AB hydrolase superfamily. Lipase family.

It is found in the secreted. The catalysed reaction is [(3R)-hydroxybutanoate](n) + H2O = [(3R)-hydroxybutanoate](n-2) + (3R)-hydroxybutanoate dimer + H(+). It catalyses the reaction [(3R)-hydroxybutanoate](n) + H2O = [(3R)-hydroxybutanoate](n-1) + (R)-3-hydroxybutanoate + H(+). It carries out the reaction (3R)-hydroxybutanoate dimer + H2O = 2 (R)-3-hydroxybutanoate + H(+). In terms of biological role, catalyzes the hydrolysis of poly(3-hydroxybutyrate) (PHB) film, producing the monomer and dimer of 3-hydroxybutyrate (3HB), while the 3HB trimer and tetramer are not formed. This is Poly(3-hydroxybutyrate) depolymerase from Delftia acidovorans (Pseudomonas acidovorans).